The chain runs to 258 residues: Glutathione S-transferase DHAR3, chloroplastic (258 aa).

The N-terminal 42 residues, 1–42 (MISLRFQPSTTAGVLSASVSRAGFIKRCGSTKPGRVGRFVTM), are a transit peptide targeting the chloroplast. Residue cysteine 52 is modified to S-glutathionyl cysteine. Lysine 54 and aspartate 65 together coordinate glutathione. Lysine 54 and aspartate 65 together coordinate L-ascorbate. In terms of domain architecture, GST N-terminal spans 56–129 (SITTPNKLGD…DVITQALEEK (74 aa)). Cysteine 66 functions as the Nucleophile in the catalytic mechanism. A disulfide bridge connects residues cysteine 66 and cysteine 69. A Glutathione-binding motif is present at residues 66–71 (CPFCQK). Lysine 93, valine 106, serine 119, histidine 205, and tryptophan 252 together coordinate glutathione. The 129-residue stretch at 130–258 (YPEPPLATPP…IAGWRPKVMG (129 aa)) folds into the GST C-terminal domain. Lysine 255 lines the L-ascorbate pocket.

The protein belongs to the GST superfamily. DHAR family. In terms of assembly, monomer. Interacts with TRX3. Post-translationally, partial S-glutathionylation and intramolecular disulfide bond formation between Cys-66 and Cys-69 in the presence of oxidized glutathione (GSSG). Could be reduced by TRX-dependent process.

The protein resides in the plastid. It localises to the chloroplast stroma. It catalyses the reaction RX + glutathione = an S-substituted glutathione + a halide anion + H(+). The enzyme catalyses L-dehydroascorbate + 2 glutathione = glutathione disulfide + L-ascorbate. Functionally, displays a dual function. As a soluble protein, exhibits glutathione-dependent thiol transferase and dehydroascorbate (DHA) reductase activities. Key component of the ascorbate recycling system. Involved in the redox homeostasis, especially in scavenging of ROS under oxidative stresses. This chain is Glutathione S-transferase DHAR3, chloroplastic (DHAR3), found in Arabidopsis thaliana (Mouse-ear cress).